The chain runs to 596 residues: Tripeptidyl-peptidase SED2 (596 aa).

An N-terminal signal peptide occupies residues 1-16 (MLVLKFVCLLASVAAA). The propeptide at 18–203 (PTSWSSHKVV…LEAMSEEEFS (186 aa)) is removed in mature form. The 387-residue stretch at 210–596 (LVTTACLREL…NFQALTKVLP (387 aa)) folds into the Peptidase S53 domain. A glycan (N-linked (GlcNAc...) asparagine) is linked at Asn265. Active-site charge relay system residues include Glu286 and Asp290. N-linked (GlcNAc...) asparagine glycosylation occurs at Asn403. Ser501 functions as the Charge relay system in the catalytic mechanism. Residues Asp543 and Ile544 each coordinate Ca(2+). N-linked (GlcNAc...) asparagine glycosylation is present at Asn572. Residues Gly576 and Asp578 each coordinate Ca(2+).

It depends on Ca(2+) as a cofactor.

The protein localises to the secreted. It localises to the extracellular space. The enzyme catalyses Release of an N-terminal tripeptide from a polypeptide.. Secreted tripeptidyl-peptidase which degrades proteins at acidic pHs and is involved in virulence. The polypeptide is Tripeptidyl-peptidase SED2 (SED2) (Arthroderma otae (strain ATCC MYA-4605 / CBS 113480) (Microsporum canis)).